Here is a 106-residue protein sequence, read N- to C-terminus: MTSEKHAFKMQLNPGMEAEYRKRHDEIWPELVDLLHKSGASDYSIHLDRETNTLFGVLTRPKDHTMASLPEHPVMKKWWAHMADIMATNPDNSPVQSDLVTLFHMP.

A substrate-binding site is contributed by Tyr20. His24 acts as the Proton donor in catalysis. Residues Tyr43 and Trp78 to Trp79 contribute to the substrate site.

It belongs to the rhamnose mutarotase family. Homodimer.

The protein resides in the cytoplasm. The catalysed reaction is alpha-L-rhamnose = beta-L-rhamnose. It functions in the pathway carbohydrate metabolism; L-rhamnose metabolism. In terms of biological role, involved in the anomeric conversion of L-rhamnose. In Rhizobium etli (strain ATCC 51251 / DSM 11541 / JCM 21823 / NBRC 15573 / CFN 42), this protein is L-rhamnose mutarotase.